The sequence spans 234 residues: Probable pectate lyase F (234 aa).

The N-terminal stretch at 1 to 17 (MWSSIAAFPVLVPVALA) is a signal peptide.

This sequence belongs to the polysaccharide lyase 3 family. Ca(2+) is required as a cofactor.

The protein localises to the secreted. The catalysed reaction is Eliminative cleavage of (1-&gt;4)-alpha-D-galacturonan to give oligosaccharides with 4-deoxy-alpha-D-galact-4-enuronosyl groups at their non-reducing ends.. Pectinolytic enzyme consist of four classes of enzymes: pectin lyase, polygalacturonase, pectin methylesterase and rhamnogalacturonase. Among pectinolytic enzymes, pectin lyase is the most important in depolymerization of pectin, since it cleaves internal glycosidic bonds of highly methylated pectins. Favors pectate, the anion, over pectin, the methyl ester. The protein is Probable pectate lyase F (plyF) of Aspergillus fumigatus (strain ATCC MYA-4609 / CBS 101355 / FGSC A1100 / Af293) (Neosartorya fumigata).